The chain runs to 347 residues: Lipoyl synthase (347 aa).

Residues cysteine 55, cysteine 60, cysteine 66, cysteine 81, cysteine 85, cysteine 88, and serine 292 each coordinate [4Fe-4S] cluster. The Radical SAM core domain occupies 67–281 (WEDREATFLI…RDYGHDIGFA (215 aa)).

This sequence belongs to the radical SAM superfamily. Lipoyl synthase family. Requires [4Fe-4S] cluster as cofactor.

Its subcellular location is the cytoplasm. The enzyme catalyses [[Fe-S] cluster scaffold protein carrying a second [4Fe-4S](2+) cluster] + N(6)-octanoyl-L-lysyl-[protein] + 2 oxidized [2Fe-2S]-[ferredoxin] + 2 S-adenosyl-L-methionine + 4 H(+) = [[Fe-S] cluster scaffold protein] + N(6)-[(R)-dihydrolipoyl]-L-lysyl-[protein] + 4 Fe(3+) + 2 hydrogen sulfide + 2 5'-deoxyadenosine + 2 L-methionine + 2 reduced [2Fe-2S]-[ferredoxin]. It functions in the pathway protein modification; protein lipoylation via endogenous pathway; protein N(6)-(lipoyl)lysine from octanoyl-[acyl-carrier-protein]: step 2/2. Its function is as follows. Catalyzes the radical-mediated insertion of two sulfur atoms into the C-6 and C-8 positions of the octanoyl moiety bound to the lipoyl domains of lipoate-dependent enzymes, thereby converting the octanoylated domains into lipoylated derivatives. The chain is Lipoyl synthase from Corynebacterium kroppenstedtii (strain DSM 44385 / JCM 11950 / CIP 105744 / CCUG 35717).